The sequence spans 229 residues: Ribosomal RNA small subunit methyltransferase G (229 aa).

S-adenosyl-L-methionine contacts are provided by residues glycine 71, 122 to 123 (AE), and arginine 139.

It belongs to the methyltransferase superfamily. RNA methyltransferase RsmG family.

The protein resides in the cytoplasm. Functionally, specifically methylates the N7 position of a guanine in 16S rRNA. The polypeptide is Ribosomal RNA small subunit methyltransferase G (Thermotoga neapolitana (strain ATCC 49049 / DSM 4359 / NBRC 107923 / NS-E)).